The primary structure comprises 301 residues: Alpha-ketoglutarate-dependent sulfate ester dioxygenase (301 aa).

Substrate is bound at residue histidine 81. Fe cation-binding residues include histidine 108 and aspartate 110. Substrate is bound at residue valine 111. Threonine 135 provides a ligand contact to 2-oxoglutarate. Histidine 264 contacts Fe cation. Residues arginine 275 and arginine 279 each contribute to the 2-oxoglutarate site.

This sequence belongs to the TfdA dioxygenase family. In terms of assembly, homotetramer. Fe(2+) serves as cofactor.

It catalyses the reaction a primary linear alkyl sulfate ester + 2-oxoglutarate + O2 = an aldehyde + sulfate + succinate + CO2 + H(+). The enzyme catalyses 2-ethylhexyl sulfate + 2-oxoglutarate + O2 = 2-ethylhexanal + sulfate + succinate + CO2 + H(+). It carries out the reaction decyl sulfate + 2-oxoglutarate + O2 = decanal + sulfate + succinate + CO2 + H(+). The catalysed reaction is hexyl sulfate + 2-oxoglutarate + O2 = hexanal + sulfate + succinate + CO2 + H(+). It catalyses the reaction nonyl sufate + 2-oxoglutarate + O2 = nonanal + sulfate + succinate + CO2 + H(+). Strongly stimulated by ascorbate. In terms of biological role, catalyzes the oxygenolytic cleavage of 2-ethylhexyl sulfate (2-EHS) in the presence of alpha-ketoglutarate to yield 2-ethyl-hexanal and succinate, the decarboxylated form of alpha-ketoglutarate. It can accept a wide range of alpha-keto acids including 2-oxo-valerate, 2-oxo-adipate, 2-oxo-octanoate, 3-methyl-2-oxo-butyrate, oxaloacetate-alpha-ketoadipate, and alpha-ketooctanoate. It can catalyze the cleavage of medium-chain alkyl sulfate esters such as butylsulfate, pentylsulfate, hexylsulfate, heptylsulfate, octylsulfate, nonylsulfate, decylsulfate and sodium dodecyl sulfate (SDS). This Pseudomonas putida (Arthrobacter siderocapsulatus) protein is Alpha-ketoglutarate-dependent sulfate ester dioxygenase.